Here is a 721-residue protein sequence, read N- to C-terminus: MDAANLVMKSSMFSKSPCPVFGSKLIPRAPPSVFTLPSTFRPLVKCIQASFPQNPDSKIPSNNSTFTCSAVTSFPSQQSQPHATSDAKLQLLISEFQSLVEPMDRVKRLLHYSTLIPSMDASLKTPENRVLGCTTQVWLHVSFDEAENRMKFVADSDSDITKGFCACLVSLLDGATPDEVLALKTEDLNALNVAGLNGKGSASRANTWHNVLVSMQKRTRALVAEREGRPRNELFPSLVITADGIQPQGSYAEAQARFLFPDESRVQELASLLKEKKIGVVAHFYMDPEVQGVLTAAQKLWPHIHISDSLVMADKAVSMAKAGCEYISVLGVDFMSENVRAILDLAGFPEVGVYRMSDERIGCSLADAAASPAYLDYLKTASTSSPSLHVVYINTSLETKAYSHELVPTITCTSSNVVQTILQAFAEVPDLEVLYGPDTYMGSNIAELFTQMSTMTDEEISEIHPLHNRSSIKSLLPRLHYFQDGTCIVHHLFGHEVVENINEMYGDAFLTAHFEVPGEMFSLAMEAKKRGMGVVGSTSNILDFIKERVEEALNRNVDEHLQFVLGTESGMITAIVAAVGKLLGSADTSSGGAKVSVEIVFPVSSESVTRTSTGSSLDQNKVNIIPGVASGEGCSLHGGCASCPYMKMNSLSSLLRVCQSLPHGKAELSAYEAGRFSLQTPNGKQIADVGCEPVLHMRHFQATKRLPEQLINQILQRSSSA.

The N-terminal 67 residues, 1-67 (MDAANLVMKS…KIPSNNSTFT (67 aa)), are a transit peptide targeting the chloroplast. Cys-133 functions as the Cysteine persulfide intermediate in the catalytic mechanism. Residues His-283 and Ser-309 each coordinate iminosuccinate. Cys-363 is a binding site for [4Fe-4S] cluster. Iminosuccinate-binding positions include 392–394 (YIN) and Ser-414. Cys-487 provides a ligand contact to [4Fe-4S] cluster. Residues 513–515 (HFE) and Thr-538 each bind iminosuccinate. Cys-643 provides a ligand contact to [4Fe-4S] cluster.

Belongs to the quinolinate synthase family. Type 1 subfamily. In terms of assembly, homodimer. [4Fe-4S] cluster serves as cofactor.

The protein localises to the plastid. It is found in the chloroplast. The catalysed reaction is iminosuccinate + dihydroxyacetone phosphate = quinolinate + phosphate + 2 H2O + H(+). It participates in alkaloid biosynthesis; nicotine biosynthesis. Its pathway is cofactor biosynthesis; NAD(+) biosynthesis; quinolinate from iminoaspartate: step 1/1. In terms of biological role, involved in the biosynthesis of pyridine alkaloid natural products, leading mainly to the production of anabasine, anatabine, nicotine and nornicotine, effective deterrents against herbivores with antiparasitic and pesticide properties (neurotoxins); nornicotine serves as the precursor in the synthesis of the carcinogen compound N'-nitrosonornicotine (NNN). Catalyzes the condensation of iminoaspartate with dihydroxyacetone phosphate to form quinolinate. The protein is Quinolinate synthase, chloroplastic of Nicotiana tabacum (Common tobacco).